A 554-amino-acid chain; its full sequence is MAIQHPDIQPAVNHSVQVAIAGAGPVGLMMANYLGQMGIDVLVVEKLDKLIDYPRAIGIDDEALRTMQSVGLVDNVLPHTTPWHAMRFLTPKGRCFADIQPMTDEFGWPRRNAFIQPQVDAVMLEGLSRFPNVRCLFSRELEAFSQQDDEVTVHLKTAEGQREIVKAQWLVACDGGASFVRRTLNVPFEGKTAPNQWIVVDIANDPLSTPHIYLCCDPVRPYVSAALPHAVRRFEFMVMPGETEEQLREPQNMRKLLSKVLPNPDNVELIRQRVYTHNARLAQRFRIDRVLLAGDAAHIMPVWQGQGYNSGMRDAFNLAWKLALVIQGKARDALLDTYQQERRDHAKAMIDLSVTAGNVLAPPKRWQGTLRDGVSWLLNYLPPVKRYFLEMRFKPMPQYYGGALVREGEAKHSPVGKMFIQPKVTLENGDVTLLDNAIGANFAVIGWGCNPLWGMSDEQIQQWRALGTRFIQVVPEVQIHTAQDNHDGVLRVGDTQGRLRSWFAQHNASLVVMRPDRFVAATAIPQTLGKTLNKLASVMTLTRPDADVSVEKVA.

Residues 17–46 (QVAI…VVEK) and 285–295 (FRIDRVLLAGD) contribute to the FAD site.

This sequence belongs to the PheA/TfdB FAD monooxygenase family. FAD is required as a cofactor.

It catalyses the reaction 3-(3-hydroxyphenyl)propanoate + NADH + O2 + H(+) = 3-(2,3-dihydroxyphenyl)propanoate + NAD(+) + H2O. The enzyme catalyses (2E)-3-(3-hydroxyphenyl)prop-2-enoate + NADH + O2 + H(+) = (2E)-3-(2,3-dihydroxyphenyl)prop-2-enoate + NAD(+) + H2O. Its pathway is aromatic compound metabolism; 3-phenylpropanoate degradation. In terms of biological role, catalyzes the insertion of one atom of molecular oxygen into position 2 of the phenyl ring of 3-(3-hydroxyphenyl)propionate (3-HPP) and hydroxycinnamic acid (3HCI). This Escherichia coli O81 (strain ED1a) protein is 3-(3-hydroxy-phenyl)propionate/3-hydroxycinnamic acid hydroxylase.